A 181-amino-acid polypeptide reads, in one-letter code: NADH-quinone oxidoreductase subunit I (181 aa).

2 consecutive 4Fe-4S ferredoxin-type domains span residues 51–80 (TRNSNGSERCVACNLCSAVCPVNCISLKKS) and 90–119 (KSFQINLSRCIFCGLCEEACPTMAIQLTPD). [4Fe-4S] cluster contacts are provided by Cys60, Cys63, Cys66, Cys70, Cys99, Cys102, Cys105, and Cys109.

It belongs to the complex I 23 kDa subunit family. In terms of assembly, NDH-1 is composed of 13 different subunits. Subunits NuoA, H, J, K, L, M, N constitute the membrane sector of the complex. Requires [4Fe-4S] cluster as cofactor.

Its subcellular location is the cell membrane. It catalyses the reaction a quinone + NADH + 5 H(+)(in) = a quinol + NAD(+) + 4 H(+)(out). NDH-1 shuttles electrons from NADH, via FMN and iron-sulfur (Fe-S) centers, to quinones in the respiratory chain. The immediate electron acceptor for the enzyme in this species is believed to be ubiquinone. Couples the redox reaction to proton translocation (for every two electrons transferred, four hydrogen ions are translocated across the cytoplasmic membrane), and thus conserves the redox energy in a proton gradient. The protein is NADH-quinone oxidoreductase subunit I of Buchnera aphidicola subsp. Cinara cedri (strain Cc).